The following is a 273-amino-acid chain: Homeobox protein ceh-43 (273 aa).

Disordered stretches follow at residues 47 to 79 (NGAT…EEAF) and 153 to 204 (RRSK…LVSS). The segment at residues 102–161 (MRKPRTIYNSSQLQMLQKKFQKTQYLALPDRAALAHELGLSQTQVKIWFQNRRSKQKKQK) is a DNA-binding region (homeobox).

The protein belongs to the distal-less homeobox family. Predominantly expressed in the head hypdodermis, neuronal support cells and CAN neurons.

It localises to the nucleus. Its function is as follows. Probable transcription factor. Binds to the sequence motif 5'-ATAAT-3' in regulatory elements. Required for development of the anterior hypodermis during embryonic morphogenesis for cell adhesion; also affects embryonic and larval viability. Modulates and maintains dopaminergic neuron differentiation. May activate dopamine pathway genes in concert with ETS domain-containing protein ast-1, and homeobox proteins ceh-40 and ceh-20. This Caenorhabditis elegans protein is Homeobox protein ceh-43 (ceh-43).